The primary structure comprises 212 residues: Regulatory protein RecX (212 aa).

This sequence belongs to the RecX family.

Its subcellular location is the cytoplasm. Its function is as follows. Modulates RecA activity. This chain is Regulatory protein RecX, found in Clostridium perfringens (strain SM101 / Type A).